Consider the following 88-residue polypeptide: Molybdopterin synthase sulfur carrier subunit (88 aa).

Glycine 88 is modified (1-thioglycine; alternate). Glycine 88 carries the glycyl adenylate; alternate modification.

The protein belongs to the MoaD family. MOCS2A subfamily. As to quaternary structure, heterotetramer; composed of 2 small (MOCS2A) and 2 large (MOCS2B) subunits. C-terminal thiocarboxylation occurs in 2 steps, it is first acyl-adenylated (-COAMP) via the hesA/moeB/thiF part of MOCS3, then thiocarboxylated (-COSH) via the rhodanese domain of MOCS3.

The protein localises to the cytoplasm. Its subcellular location is the cytosol. It participates in cofactor biosynthesis; molybdopterin biosynthesis. Functionally, acts as a sulfur carrier required for molybdopterin biosynthesis. Component of the molybdopterin synthase complex that catalyzes the conversion of precursor Z into molybdopterin by mediating the incorporation of 2 sulfur atoms into precursor Z to generate a dithiolene group. In the complex, serves as sulfur donor by being thiocarboxylated (-COSH) at its C-terminus by MOCS3. After interaction with MOCS2B, the sulfur is then transferred to precursor Z to form molybdopterin. The protein is Molybdopterin synthase sulfur carrier subunit of Mus musculus (Mouse).